The primary structure comprises 102 residues: Small ribosomal subunit protein uS10 (102 aa).

This sequence belongs to the universal ribosomal protein uS10 family. In terms of assembly, part of the 30S ribosomal subunit.

In terms of biological role, involved in the binding of tRNA to the ribosomes. In Methanobrevibacter smithii (strain ATCC 35061 / DSM 861 / OCM 144 / PS), this protein is Small ribosomal subunit protein uS10.